The primary structure comprises 1226 residues: DNA-directed RNA polymerase subunit beta (1226 aa).

It belongs to the RNA polymerase beta chain family. In terms of assembly, the RNAP catalytic core consists of 2 alpha, 1 beta, 1 beta' and 1 omega subunit. When a sigma factor is associated with the core the holoenzyme is formed, which can initiate transcription.

It catalyses the reaction RNA(n) + a ribonucleoside 5'-triphosphate = RNA(n+1) + diphosphate. Functionally, DNA-dependent RNA polymerase catalyzes the transcription of DNA into RNA using the four ribonucleoside triphosphates as substrates. This Leptospira borgpetersenii serovar Hardjo-bovis (strain JB197) protein is DNA-directed RNA polymerase subunit beta.